A 395-amino-acid polypeptide reads, in one-letter code: Cystathionine beta-lyase (395 aa).

Lys-210 carries the post-translational modification N6-(pyridoxal phosphate)lysine.

This sequence belongs to the trans-sulfuration enzymes family. In terms of assembly, homotetramer. It depends on pyridoxal 5'-phosphate as a cofactor.

It is found in the cytoplasm. The enzyme catalyses L,L-cystathionine + H2O = L-homocysteine + pyruvate + NH4(+). It catalyses the reaction an S-substituted L-cysteine + H2O = a thiol + pyruvate + NH4(+). It participates in amino-acid biosynthesis; L-methionine biosynthesis via de novo pathway; L-homocysteine from L-cystathionine: step 1/1. Its function is as follows. Catalyzes the cleavage of cystathionine to homocysteine, pyruvate and ammonia during methionine biosynthesis. The sequence is that of Cystathionine beta-lyase (metC) from Salmonella typhimurium (strain LT2 / SGSC1412 / ATCC 700720).